A 407-amino-acid chain; its full sequence is Transmembrane protein 184B (407 aa).

The segment at 1–25 (MTVRGDVLAPDPASPTTAAASPSVS) is disordered. Low complexity predominate over residues 9–25 (APDPASPTTAAASPSVS). 7 helical membrane-spanning segments follow: residues 40–60 (FLMT…ALLI), 84–104 (ILFI…FFTN), 121–141 (LVIY…SSIM), 178–198 (LQFC…QAFG), 214–234 (VTII…LFYF), 249–269 (FFMV…LAIL), and 290–310 (VAAG…ALAL). The interval 369–395 (TLEPGPTWRGGAHGLSRSHSLSGARDN) is disordered. Residues serine 388, serine 402, and serine 403 each carry the phosphoserine modification.

The protein belongs to the TMEM184 family.

Its subcellular location is the membrane. In terms of biological role, may activate the MAP kinase signaling pathway. This Homo sapiens (Human) protein is Transmembrane protein 184B (TMEM184B).